The primary structure comprises 110 residues: MSIQNLNTRDPFADAIKGNDDDIQDGLVHIRIQQRNGRKTLTTVQGLSAEYDLKKIVRSCKKEFACNGTVIEHPEYGEVLQLQGDQRENICQWLTKVGLAKPDQLKVHGF.

Thr-40 is subject to Phosphothreonine.

This sequence belongs to the SUI1 family.

Its function is as follows. Probably involved in translation. This is Eukaryotic translation initiation factor eIF1 from Drosophila melanogaster (Fruit fly).